The chain runs to 407 residues: 5-aminolevulinate synthase 2 (407 aa).

Residues arginine 21 and serine 137 each contribute to the substrate site. Pyridoxal 5'-phosphate contacts are provided by serine 189, histidine 217, and threonine 245. Lysine 248 is an active-site residue. Residue lysine 248 is modified to N6-(pyridoxal phosphate)lysine. Pyridoxal 5'-phosphate-binding residues include threonine 277 and threonine 278. Residue threonine 363 participates in substrate binding.

This sequence belongs to the class-II pyridoxal-phosphate-dependent aminotransferase family. As to quaternary structure, homodimer. The cofactor is pyridoxal 5'-phosphate.

It carries out the reaction succinyl-CoA + glycine + H(+) = 5-aminolevulinate + CO2 + CoA. It functions in the pathway porphyrin-containing compound metabolism; protoporphyrin-IX biosynthesis; 5-aminolevulinate from glycine: step 1/1. The chain is 5-aminolevulinate synthase 2 (hemT) from Cereibacter sphaeroides (strain ATCC 17023 / DSM 158 / JCM 6121 / CCUG 31486 / LMG 2827 / NBRC 12203 / NCIMB 8253 / ATH 2.4.1.) (Rhodobacter sphaeroides).